A 937-amino-acid chain; its full sequence is Glycine dehydrogenase (decarboxylating) (937 aa).

Position 686 is an N6-(pyridoxal phosphate)lysine (K686).

It belongs to the GcvP family. The glycine cleavage system is composed of four proteins: P, T, L and H. It depends on pyridoxal 5'-phosphate as a cofactor.

It carries out the reaction N(6)-[(R)-lipoyl]-L-lysyl-[glycine-cleavage complex H protein] + glycine + H(+) = N(6)-[(R)-S(8)-aminomethyldihydrolipoyl]-L-lysyl-[glycine-cleavage complex H protein] + CO2. The glycine cleavage system catalyzes the degradation of glycine. The P protein binds the alpha-amino group of glycine through its pyridoxal phosphate cofactor; CO(2) is released and the remaining methylamine moiety is then transferred to the lipoamide cofactor of the H protein. The polypeptide is Glycine dehydrogenase (decarboxylating) (Mesorhizobium japonicum (strain LMG 29417 / CECT 9101 / MAFF 303099) (Mesorhizobium loti (strain MAFF 303099))).